Consider the following 418-residue polypeptide: F-box protein At5g03970 (418 aa).

Positions 18–66 (STHEVLNSNDTMCEILILLPPETIYKLILVSKRWLEIIASPCFRHTYLA) constitute an F-box domain.

This is F-box protein At5g03970 from Arabidopsis thaliana (Mouse-ear cress).